We begin with the raw amino-acid sequence, 596 residues long: Signal peptide peptidase-like 2B (596 aa).

The N-terminal stretch at 1 to 21 (MAARWAQFLLFSLLSLPQVYC) is a signal peptide. The Lumenal segment spans residues 22–170 (EYGMVHVLSE…APNEPVLDYN (149 aa)). The PA domain maps to 53-147 (HDLGKASLLQ…LLSYSDMLDI (95 aa)). Asn93 carries an N-linked (GlcNAc...) asparagine glycan. A helical membrane pass occupies residues 171-191 (MVIIFVMAVGTVAIGGYWAGS). The Cytoplasmic segment spans residues 192-219 (RDVKERYMKHKRDDGAEKHEDETVDVTP). Residues 220-240 (IMICVFVVMCCSMLVLLYFFY) traverse the membrane as a helical segment. Topologically, residues 241-242 (DH) are lumenal. A helical membrane pass occupies residues 243 to 263 (LVYVIIGIFCLAASIGLYSCL). Residues 264 to 289 (SPFVRRFPLGKCRIPDNNLPYFHKRP) lie on the Cytoplasmic side of the membrane. A helical membrane pass occupies residues 290–310 (QVRILLLAVFCISVSVVWGVF). Residues 311–315 (RNEDQ) lie on the Lumenal side of the membrane. Residues 316 to 336 (WAWVLQDALGIAFCLYMLKTI) form a helical membrane-spanning segment. The Cytoplasmic segment spans residues 337 to 344 (RLPTFKGC). Residues 345–365 (TLLLLVLFVYDVFFVFITPFL) form a helical membrane-spanning segment. Asp355 is a catalytic residue. The Lumenal portion of the chain corresponds to 366 to 408 (TKTGESIMVEVAAGPSDSATHEKLPMVLKVPRLNSSPLALCDR). Residues 409 to 429 (PFSLLGFGDILVPGLLVAYCH) traverse the membrane as a helical segment. Residue Asp417 is part of the active site. The Cytoplasmic portion of the chain corresponds to 430–441 (RFDIQVQSSRVY). A helical transmembrane segment spans residues 442–462 (FVACTIAYGIGLLVTFVALAL). Residues 463 to 466 (MQMG) lie on the Lumenal side of the membrane. A helical transmembrane segment spans residues 467–487 (QPALLYLVPCTLITSFSVALW). Positions 468–470 (PAL) match the PAL motif. Residues 488-596 (RKELAMFWTG…SLNLEQKQLE (109 aa)) are Cytoplasmic-facing. The segment at 543–596 (KELHSPTLAAEEPADNDTKTEQSEVSIAQSEEAAGHNKDDLESKSLNLEQKQLE) is disordered. The span at 575–585 (AAGHNKDDLES) shows a compositional bias: basic and acidic residues. Residues 586-596 (KSLNLEQKQLE) are compositionally biased toward polar residues.

This sequence belongs to the peptidase A22B family.

The protein resides in the cell membrane. It is found in the golgi apparatus membrane. It localises to the lysosome membrane. Its subcellular location is the endosome membrane. The protein localises to the membrane. Intramembrane-cleaving aspartic protease (I-CLiP) that cleaves type II membrane signal peptides in the hydrophobic plane of the membrane. This is Signal peptide peptidase-like 2B from Gallus gallus (Chicken).